We begin with the raw amino-acid sequence, 230 residues long: GTP cyclohydrolase III (230 aa).

Belongs to the archaeal-type GTP cyclohydrolase family.

It catalyses the reaction GTP + 3 H2O = 2-amino-5-formylamino-6-(5-phospho-D-ribosylamino)pyrimidin-4(3H)-one + 2 phosphate + 2 H(+). Its function is as follows. Catalyzes the formation of 2-amino-5-formylamino-6-ribofuranosylamino-4(3H)-pyrimidinone ribonucleotide monophosphate and inorganic phosphate from GTP. Also has an independent pyrophosphate phosphohydrolase activity. This chain is GTP cyclohydrolase III, found in Saccharolobus islandicus (strain M.16.27) (Sulfolobus islandicus).